Reading from the N-terminus, the 85-residue chain is Putative membrane protein insertion efficiency factor (85 aa).

This sequence belongs to the UPF0161 family.

It localises to the cell inner membrane. Could be involved in insertion of integral membrane proteins into the membrane. The protein is Putative membrane protein insertion efficiency factor of Dictyoglomus thermophilum (strain ATCC 35947 / DSM 3960 / H-6-12).